A 362-amino-acid chain; its full sequence is MDVHLFDYAEPGNYSDINWPCNSSDCIVVDTVQCPTMPNKNVLLYTLSFIYIFIFVIGMIANSVVVWVNIQAKTTGYDTHCYILNLAIADLWVVITIPVWVVSLVQHNQWPMGELTCKITHLIFSINLFGSIFFLACMSVDRYLSITYFTGTSSYKKKMVRRVVCILVWLLAFFVSLPDTYYLKTVTSASNNETYCRSFYPEHSIKEWLIGMELVSVILGFAVPFTIIAIFYFLLARAMSASGDQEKHSSRKIIFSYVVVFLVCWLPYHFVVLLDIFSILHYIPFTCQLENVLFTALHVTQCLSLVHCCVNPVLYSFINRNYRYELMKAFIFKYSAKTGLTKLIDASRVSETEYSALEQNTK.

The Extracellular portion of the chain corresponds to 1-47 (MDVHLFDYAEPGNYSDINWPCNSSDCIVVDTVQCPTMPNKNVLLYTL). 2 N-linked (GlcNAc...) asparagine glycosylation sites follow: asparagine 13 and asparagine 22. The helical transmembrane segment at 48–68 (SFIYIFIFVIGMIANSVVVWV) threads the bilayer. Residues 69–81 (NIQAKTTGYDTHC) lie on the Cytoplasmic side of the membrane. Residues 82-102 (YILNLAIADLWVVITIPVWVV) form a helical membrane-spanning segment. Residues 103–118 (SLVQHNQWPMGELTCK) lie on the Extracellular side of the membrane. The cysteines at positions 117 and 196 are disulfide-linked. A helical membrane pass occupies residues 119-139 (ITHLIFSINLFGSIFFLACMS). Residues 140-162 (VDRYLSITYFTGTSSYKKKMVRR) lie on the Cytoplasmic side of the membrane. Residues 163 to 183 (VVCILVWLLAFFVSLPDTYYL) traverse the membrane as a helical segment. The Extracellular portion of the chain corresponds to 184–213 (KTVTSASNNETYCRSFYPEHSIKEWLIGME). Residues 214–234 (LVSVILGFAVPFTIIAIFYFL) traverse the membrane as a helical segment. Residues 235–252 (LARAMSASGDQEKHSSRK) lie on the Cytoplasmic side of the membrane. The chain crosses the membrane as a helical span at residues 253-273 (IIFSYVVVFLVCWLPYHFVVL). Residues 274–296 (LDIFSILHYIPFTCQLENVLFTA) lie on the Extracellular side of the membrane. Residues 297 to 319 (LHVTQCLSLVHCCVNPVLYSFIN) form a helical membrane-spanning segment. Residues 320-362 (RNYRYELMKAFIFKYSAKTGLTKLIDASRVSETEYSALEQNTK) lie on the Cytoplasmic side of the membrane. Residues 324–362 (YELMKAFIFKYSAKTGLTKLIDASRVSETEYSALEQNTK) form a C-terminal cytoplasmic tail region. A phosphoserine mark is found at serine 347, serine 350, and serine 355.

Belongs to the G-protein coupled receptor 1 family. Atypical chemokine receptor subfamily. In terms of assembly, homodimer. Can form heterodimers with CXCR4; heterodimerization may regulate CXCR4 signaling activity. Interacts with ARRB1 and ARRB2. Post-translationally, the Ser/Thr residues in the C-terminal cytoplasmic tail may be phosphorylated. Ubiquitinated at the Lys residues in its C-terminal cytoplasmic tail and is essential for correct trafficking from and to the cell membrane. Deubiquitinated by CXCL12-stimulation in a reversible manner. Not detected in blood, liver, lung and heart, but high expression detected in several tumor cell lines (at protein level). Expressed in heart, spleen, kidney, lung, ovary, brain, testis, astrocytes, neutrophils and B-lymphocytes.

The protein resides in the cell membrane. It is found in the early endosome. Its subcellular location is the recycling endosome. Atypical chemokine receptor that controls chemokine levels and localization via high-affinity chemokine binding that is uncoupled from classic ligand-driven signal transduction cascades, resulting instead in chemokine sequestration, degradation, or transcytosis. Also known as interceptor (internalizing receptor) or chemokine-scavenging receptor or chemokine decoy receptor. Acts as a receptor for chemokines CXCL11 and CXCL12/SDF1. Chemokine binding does not activate G-protein-mediated signal transduction but instead induces beta-arrestin recruitment, leading to ligand internalization and activation of MAPK signaling pathway. Required for regulation of CXCR4 protein levels in migrating interneurons, thereby adapting their chemokine responsiveness. In glioma cells, transduces signals via MEK/ERK pathway, mediating resistance to apoptosis. Promotes cell growth and survival. Not involved in cell migration, adhesion or proliferation of normal hematopoietic progenitors but activated by CXCL11 in malignant hemapoietic cells, leading to phosphorylation of ERK1/2 (MAPK3/MAPK1) and enhanced cell adhesion and migration. Plays a regulatory role in CXCR4-mediated activation of cell surface integrins by CXCL12. Required for heart valve development. Regulates axon guidance in the oculomotor system through the regulation of CXCL12 levels. The protein is Atypical chemokine receptor 3 of Mus musculus (Mouse).